The primary structure comprises 899 residues: Tuberous sclerosis 1 protein homolog (899 aa).

Coiled coils occupy residues 540–706 (LSST…CVNI) and 737–847 (SDEQ…ELKN). A disordered region spans residues 874-899 (NDSLHPKVGPPRRQSTDTSRSTFRQY). Over residues 889–899 (TDTSRSTFRQY) the composition is skewed to polar residues.

As to quaternary structure, interacts with tsc2.

It is found in the cytoplasm. In terms of biological role, together with tsc2, required for uptake of various amino acids from the environment and for proper conjugation. Involved in induction of gene expression of permeases and genes required for meiosis upon nitrogen starvation. May act as a GTPase-activating protein (GAP) for the small GTPase rhb1. In Schizosaccharomyces pombe (strain 972 / ATCC 24843) (Fission yeast), this protein is Tuberous sclerosis 1 protein homolog (tsc1).